The sequence spans 374 residues: Layilin (374 aa).

The N-terminal stretch at 1 to 24 (MQPGPALQAVLLAVLLSEPRSSKG) is a signal peptide. At 25–221 (RLLSGQLVCR…TKETFKESRE (197 aa)) the chain is on the extracellular side. One can recognise a C-type lectin domain in the interval 37–177 (TRRPCYKVIY…CNMKNNFICK (141 aa)). Intrachain disulfides connect Cys-63/Cys-176 and Cys-142/Cys-168. Asn-109 is a glycosylation site (N-linked (GlcNAc...) asparagine). Residues 184–212 (STTPSIRPGGEATEPPTPVLPEETQKEDT) form a disordered region. A helical membrane pass occupies residues 222 to 242 (AALNLAYILIPSIPLFLLLVV). At 243 to 374 (TSAACWVWIC…SGWVENEIYY (132 aa)) the chain is on the cytoplasmic side. Phosphoserine is present on residues Ser-279 and Ser-292. Positions 323–367 (DYDNMAVNPSESGFVTLASMESGFVTNDIYEFSPDRMGRSKESGW) are interaction with NF2. The interval 330–374 (NPSESGFVTLASMESGFVTNDIYEFSPDRMGRSKESGWVENEIYY) is interaction with TLN1. 5 repeat units span residues 333-337 (ESGFV), 343-347 (ESGFV), 349-352 (NDIY), 364-368 (ESGWV), and 370-373 (NEIY). Residues 333–368 (ESGFVTLASMESGFVTNDIYEFSPDRMGRSKESGWV) are 3 X 5 AA repeats of E-S-G-X-V. The tract at residues 349 to 373 (NDIYEFSPDRMGRSKESGWVENEIY) is 2 X 4 AA repeats of N-X-I-Y.

In terms of assembly, interacts with NF2 and RDX. Interacts with TLN1. In terms of tissue distribution, widely expressed. Abundant in the ovary.

The protein localises to the membrane. Its function is as follows. Receptor for hyaluronate. The sequence is that of Layilin (LAYN) from Cricetulus griseus (Chinese hamster).